Reading from the N-terminus, the 275-residue chain is Expansin-B6 (275 aa).

Positions Met1–Cys25 are cleaved as a signal peptide. Asn33 carries an N-linked (GlcNAc...) asparagine glycan. An Expansin-like EG45 domain is found at Gly64–Leu170. 3 cysteine pairs are disulfide-bonded: Cys67/Cys95, Cys98/Cys165, and Cys103/Cys109. In terms of domain architecture, Expansin-like CBD spans Val183–Ser270.

It belongs to the expansin family. Expansin B subfamily. In terms of tissue distribution, expressed in internodes.

The protein localises to the secreted. It localises to the cell wall. The protein resides in the membrane. In terms of biological role, may cause loosening and extension of plant cell walls by disrupting non-covalent bonding between cellulose microfibrils and matrix glucans. No enzymatic activity has been found. May be required for rapid internodal elongation in deepwater rice during submergence. This Oryza sativa subsp. japonica (Rice) protein is Expansin-B6 (EXPB6).